The primary structure comprises 250 residues: tRNA (guanine-N(1)-)-methyltransferase (250 aa).

S-adenosyl-L-methionine contacts are provided by residues glycine 116 and 136–141 (IGDYVL).

Belongs to the RNA methyltransferase TrmD family. As to quaternary structure, homodimer.

The protein resides in the cytoplasm. The enzyme catalyses guanosine(37) in tRNA + S-adenosyl-L-methionine = N(1)-methylguanosine(37) in tRNA + S-adenosyl-L-homocysteine + H(+). Functionally, specifically methylates guanosine-37 in various tRNAs. This Pseudomonas fluorescens (strain SBW25) protein is tRNA (guanine-N(1)-)-methyltransferase.